The following is a 396-amino-acid chain: ATP phosphoribosyltransferase regulatory subunit (396 aa).

This sequence belongs to the class-II aminoacyl-tRNA synthetase family. HisZ subfamily. As to quaternary structure, heteromultimer composed of HisG and HisZ subunits.

Its subcellular location is the cytoplasm. It participates in amino-acid biosynthesis; L-histidine biosynthesis; L-histidine from 5-phospho-alpha-D-ribose 1-diphosphate: step 1/9. Required for the first step of histidine biosynthesis. May allow the feedback regulation of ATP phosphoribosyltransferase activity by histidine. The protein is ATP phosphoribosyltransferase regulatory subunit of Alkaliphilus metalliredigens (strain QYMF).